A 252-amino-acid chain; its full sequence is Ureidoacrylate amidohydrolase RutB (252 aa).

The span at 1–14 (MSTPARNTTLTSNT) shows a compositional bias: polar residues. Positions 1 to 31 (MSTPARNTTLTSNTPAGAPRLPGAPAPQVLP) are disordered. Over residues 15–27 (PAGAPRLPGAPAP) the composition is skewed to low complexity. Asp-50 acts as the Proton acceptor in catalysis. Lys-159 is an active-site residue. Cys-192 acts as the Nucleophile in catalysis.

Belongs to the isochorismatase family. RutB subfamily.

The enzyme catalyses (Z)-3-ureidoacrylate + H2O + H(+) = (Z)-3-aminoacrylate + NH4(+) + CO2. It catalyses the reaction (Z)-3-ureidoacrylate + H2O = (Z)-3-aminoacrylate + carbamate + H(+). It carries out the reaction (Z)-2-methylureidoacrylate + H2O + H(+) = (Z)-2-methylaminoacrylate + NH4(+) + CO2. Functionally, hydrolyzes ureidoacrylate to form aminoacrylate and carbamate. The carbamate hydrolyzes spontaneously, thereby releasing one of the nitrogen atoms of the pyrimidine ring as ammonia and one of its carbon atoms as CO2. The protein is Ureidoacrylate amidohydrolase RutB of Variovorax paradoxus (strain S110).